A 145-amino-acid polypeptide reads, in one-letter code: Probable disulfide formation protein (145 aa).

The chain crosses the membrane as a helical span at residues 9–28; sequence ENLLLLIWVQAFLALAGSLF. An intrachain disulfide couples Cys-38 to Cys-41. Helical transmembrane passes span 43 to 62 and 69 to 86; these read YQRI…AIKK and PGLF…YHYL. Cys-100 and Cys-106 are oxidised to a cystine. Residues 115–137 traverse the membrane as a helical segment; sequence GFISIPFMAGVAFLIIFVLHLLI.

Belongs to the DsbB family. BdbC subfamily.

Its subcellular location is the cell membrane. Functionally, required for disulfide bond formation in some proteins. The polypeptide is Probable disulfide formation protein (Oceanobacillus iheyensis (strain DSM 14371 / CIP 107618 / JCM 11309 / KCTC 3954 / HTE831)).